A 2073-amino-acid chain; its full sequence is Dedicator of cytokinesis protein 11 (2073 aa).

The residue at position 12 (Ser-12) is a Phosphoserine. At Thr-16 the chain carries Phosphothreonine. 2 positions are modified to phosphoserine: Ser-23 and Ser-161. In terms of domain architecture, PH spans 165–272 (GVIKQGWLHK…WLIMLKKIIQ (108 aa)). A Phosphotyrosine modification is found at Tyr-248. Ser-306 and Ser-445 each carry phosphoserine. The region spanning 640 to 818 (KNHLYVYPLQ…PLLKIKTHLE (179 aa)) is the C2 DOCK-type domain. Residues 1227–1267 (QNGHGIKREDSRGSLIPEGATGFPDPGSTSENTRQSSSRSS) form a disordered region. Phosphoserine is present on residues Ser-1237 and Ser-1240. The segment covering 1254–1267 (STSENTRQSSSRSS) has biased composition (low complexity). Residues 1609 to 2036 (KSYASTPELR…LSDIIHEQIL (428 aa)) form the DOCKER domain.

The protein belongs to the DOCK family. As to quaternary structure, interacts with CDC42. In terms of tissue distribution, expressed in spleen, thymus, mesenteric lymph nodes (MLN), bone marrow and peripheral blood lymphocytes. Enriched in B-cells from germinal centers. Expressed in B-, T- and dendritic cells as well as Purkinje cells.

Functionally, guanine nucleotide-exchange factor (GEF) that activates CDC42 by exchanging bound GDP for free GTP. Required for marginal zone (MZ) B-cell development, is associated with early bone marrow B-cell development, MZ B-cell formation, MZ B-cell number and marginal metallophilic macrophages morphology. Facilitates filopodia formation through the activation of CDC42. The protein is Dedicator of cytokinesis protein 11 of Mus musculus (Mouse).